The following is an 89-amino-acid chain: MARKSIIARNERRKELVEKYAAKREELKKAGDYEALRKLPRDSSATRVRNRCVLTGRGRGNYEKFGLCRNMFRKLALEGKLPGVRKASW.

This sequence belongs to the universal ribosomal protein uS14 family. In terms of assembly, part of the 30S ribosomal subunit. Contacts proteins S3 and S10.

Its function is as follows. Binds 16S rRNA, required for the assembly of 30S particles and may also be responsible for determining the conformation of the 16S rRNA at the A site. In Chlorobaculum parvum (strain DSM 263 / NCIMB 8327) (Chlorobium vibrioforme subsp. thiosulfatophilum), this protein is Small ribosomal subunit protein uS14.